The sequence spans 315 residues: Methionyl-tRNA formyltransferase (315 aa).

A (6S)-5,6,7,8-tetrahydrofolate-binding site is contributed by 113–116 (SLLP).

It belongs to the Fmt family.

It carries out the reaction L-methionyl-tRNA(fMet) + (6R)-10-formyltetrahydrofolate = N-formyl-L-methionyl-tRNA(fMet) + (6S)-5,6,7,8-tetrahydrofolate + H(+). Its function is as follows. Attaches a formyl group to the free amino group of methionyl-tRNA(fMet). The formyl group appears to play a dual role in the initiator identity of N-formylmethionyl-tRNA by promoting its recognition by IF2 and preventing the misappropriation of this tRNA by the elongation apparatus. This Pectobacterium atrosepticum (strain SCRI 1043 / ATCC BAA-672) (Erwinia carotovora subsp. atroseptica) protein is Methionyl-tRNA formyltransferase.